The following is a 371-amino-acid chain: T-cell acute lymphocytic leukemia protein 1 (371 aa).

The tract at residues 1–71 (MMEKRQPELC…DVPLQNSSNG (71 aa)) is disordered. Residues 34 to 57 (GCKEDEESKREEGDKEGGGRFKGD) show a composition bias toward basic and acidic residues. Positions 204-256 (VRRIFTNSRERWRQQNVNGAFAELRKLIPTHPPDKKLSKNEILRLAMKYISFL) constitute a bHLH domain. A disordered region spans residues 263 to 371 (QDGGRNVSST…GRPLDGSSRR (109 aa)). Residues 293-305 (HQDRVVGLARDDI) show a composition bias toward basic and acidic residues. Positions 321–335 (GDADGSPESFMEDQD) are enriched in acidic residues.

Expressed in the main hemopoietic organs in adults, namely the kidney and the spleen. Also expressed in the liver, brain, gill and gonads.

It is found in the nucleus. In terms of biological role, transcription factor that plays a pivotal role in hemopoietic and endothelial development. In Takifugu rubripes (Japanese pufferfish), this protein is T-cell acute lymphocytic leukemia protein 1.